The sequence spans 288 residues: Inositol monophosphatase 2 (288 aa).

4 residues coordinate Mg(2+): Glu81, Asp101, Ile103, and Asp104. Glu81 is a substrate binding site. Substrate-binding positions include 103 to 106 (IDGT), 205 to 207 (GSS), Gln224, and Asp231. Residue Asp231 coordinates Mg(2+).

This sequence belongs to the inositol monophosphatase superfamily. In terms of assembly, homodimer. It depends on Mg(2+) as a cofactor.

The protein localises to the cytoplasm. It catalyses the reaction a myo-inositol phosphate + H2O = myo-inositol + phosphate. The catalysed reaction is 1D-myo-inositol 1-phosphate + H2O = myo-inositol + phosphate. It carries out the reaction 1D-myo-inositol 2-phosphate + H2O = myo-inositol + phosphate. The enzyme catalyses 1D-myo-inositol 3-phosphate + H2O = myo-inositol + phosphate. It catalyses the reaction 1D-myo-inositol 4-phosphate + H2O = myo-inositol + phosphate. The catalysed reaction is 1D-myo-inositol 5-phosphate + H2O = myo-inositol + phosphate. It carries out the reaction 1D-myo-inositol 6-phosphate + H2O = myo-inositol + phosphate. The enzyme catalyses alpha-D-glucose 1-phosphate + H2O = D-glucose + phosphate. It catalyses the reaction glycerol 2-phosphate + H2O = glycerol + phosphate. The catalysed reaction is adenosine 2'-phosphate + H2O = adenosine + phosphate. It functions in the pathway polyol metabolism; myo-inositol biosynthesis; myo-inositol from D-glucose 6-phosphate: step 2/2. Its activity is regulated as follows. Inhibited by high Li(+) and restricted Mg(2+) concentrations. In terms of biological role, phosphatase that can use myo-inositol monophosphates, myo-inositol 1,4-diphosphate, scyllo-inositol-1,4-diphosphate, glucose-1-phosphate, beta-glycerophosphate and 2'-AMP as substrates in vitro. It is likely that IMPA2 has an as yet unidentified in vivo substrate(s). Has been implicated as the pharmacological target for lithium (Li(+)) action in brain. The sequence is that of Inositol monophosphatase 2 from Homo sapiens (Human).